The following is a 270-amino-acid chain: Putative pyruvate, phosphate dikinase regulatory protein (270 aa).

Residue 149 to 156 (GVSRTSKT) participates in ADP binding.

This sequence belongs to the pyruvate, phosphate/water dikinase regulatory protein family. PDRP subfamily.

The catalysed reaction is N(tele)-phospho-L-histidyl/L-threonyl-[pyruvate, phosphate dikinase] + ADP = N(tele)-phospho-L-histidyl/O-phospho-L-threonyl-[pyruvate, phosphate dikinase] + AMP + H(+). It carries out the reaction N(tele)-phospho-L-histidyl/O-phospho-L-threonyl-[pyruvate, phosphate dikinase] + phosphate + H(+) = N(tele)-phospho-L-histidyl/L-threonyl-[pyruvate, phosphate dikinase] + diphosphate. Functionally, bifunctional serine/threonine kinase and phosphorylase involved in the regulation of the pyruvate, phosphate dikinase (PPDK) by catalyzing its phosphorylation/dephosphorylation. The chain is Putative pyruvate, phosphate dikinase regulatory protein from Sphingopyxis alaskensis (strain DSM 13593 / LMG 18877 / RB2256) (Sphingomonas alaskensis).